Reading from the N-terminus, the 578-residue chain is NADH-quinone oxidoreductase subunit C/D (578 aa).

Residues 1–167 form an NADH dehydrogenase I subunit C region; it reads MILSLFKLFG…DEFYFTKQKE (167 aa). Residues 192–578 form an NADH dehydrogenase I subunit D region; the sequence is EYMFLNFGPN…IDFVMSDVDR (387 aa).

In the N-terminal section; belongs to the complex I 30 kDa subunit family. The protein in the C-terminal section; belongs to the complex I 49 kDa subunit family. NDH-1 is composed of 13 different subunits. Subunits NuoB, CD, E, F, and G constitute the peripheral sector of the complex.

The protein resides in the cell inner membrane. It catalyses the reaction a quinone + NADH + 5 H(+)(in) = a quinol + NAD(+) + 4 H(+)(out). NDH-1 shuttles electrons from NADH, via FMN and iron-sulfur (Fe-S) centers, to quinones in the respiratory chain. The immediate electron acceptor for the enzyme in this species is believed to be ubiquinone. Couples the redox reaction to proton translocation (for every two electrons transferred, four hydrogen ions are translocated across the cytoplasmic membrane), and thus conserves the redox energy in a proton gradient. This chain is NADH-quinone oxidoreductase subunit C/D, found in Buchnera aphidicola subsp. Cinara cedri (strain Cc).